The following is a 275-amino-acid chain: Uronate dehydrogenase (275 aa).

Residues Gly22–Leu23, Asp42–Ala44, Asp60–Leu61, and Phe80–Ser84 each bind NAD(+). Substrate-binding positions include Ser84 and Ser120–His122. The Proton acceptor role is filled by Tyr145. Lys149 contributes to the NAD(+) binding site. Substrate is bound at residue Ser174. Ser175 provides a ligand contact to NAD(+). Arg183 contacts substrate.

The protein belongs to the NAD(P)-dependent epimerase/dehydratase family. Homohexamer.

It carries out the reaction beta-D-galacturonate + NAD(+) = D-galactaro-1,5-lactone + NADH + H(+). The catalysed reaction is beta-D-glucuronate + NAD(+) = D-glucaro-1,5-lactone + NADH + H(+). It participates in carbohydrate acid metabolism; D-galacturonate degradation via prokaryotic oxidative pathway. In terms of biological role, catalyzes the oxidation of beta-D-galacturonate and beta-D-glucuronate to galactarate and D-glucarate, respectively. Cannot use NADP(+) instead of NAD(+) as cosubstrate. This chain is Uronate dehydrogenase (udh), found in Pseudomonas syringae pv. tomato (strain ATCC BAA-871 / DC3000).